The chain runs to 127 residues: Large ribosomal subunit protein uL22c (127 aa).

The protein belongs to the universal ribosomal protein uL22 family. In terms of assembly, part of the 50S ribosomal subunit.

Its subcellular location is the plastid. The protein localises to the chloroplast. Its function is as follows. This protein binds specifically to 23S rRNA. The globular domain of the protein is located near the polypeptide exit tunnel on the outside of the subunit, while an extended beta-hairpin is found that lines the wall of the exit tunnel in the center of the 70S ribosome. The polypeptide is Large ribosomal subunit protein uL22c (rpl22) (Acorus calamus var. americanus (American sweet flag)).